The sequence spans 492 residues: NADH-quinone oxidoreductase subunit N (492 aa).

14 consecutive transmembrane segments (helical) span residues 5–25 (PMTA…AWLI), 37–57 (TYFI…IDAL), 72–92 (VVDP…AVSI), 104–124 (LYEG…LVMI), 129–149 (FLTL…AIAL), 164–184 (YVLG…LYGA), 205–225 (VVLL…MGAV), 239–259 (PTAM…AWGL), 276–295 (MLVI…GIVQ), 302–322 (LAYS…AGVV), 337–357 (MFYS…VMLL), 380–400 (FAFV…AVGF), 414–434 (GLTW…FYYL), and 466–486 (VAVL…LNAI).

The protein belongs to the complex I subunit 2 family. NDH-1 is composed of 14 different subunits. Subunits NuoA, H, J, K, L, M, N constitute the membrane sector of the complex.

The protein localises to the cell inner membrane. The enzyme catalyses a quinone + NADH + 5 H(+)(in) = a quinol + NAD(+) + 4 H(+)(out). NDH-1 shuttles electrons from NADH, via FMN and iron-sulfur (Fe-S) centers, to quinones in the respiratory chain. The immediate electron acceptor for the enzyme in this species is believed to be ubiquinone. Couples the redox reaction to proton translocation (for every two electrons transferred, four hydrogen ions are translocated across the cytoplasmic membrane), and thus conserves the redox energy in a proton gradient. The chain is NADH-quinone oxidoreductase subunit N from Paraburkholderia phymatum (strain DSM 17167 / CIP 108236 / LMG 21445 / STM815) (Burkholderia phymatum).